The chain runs to 139 residues: Putative pre-16S rRNA nuclease (139 aa).

The protein belongs to the YqgF nuclease family.

It localises to the cytoplasm. Its function is as follows. Could be a nuclease involved in processing of the 5'-end of pre-16S rRNA. This chain is Putative pre-16S rRNA nuclease, found in Streptococcus pyogenes serotype M3 (strain ATCC BAA-595 / MGAS315).